The following is a 394-amino-acid chain: NAD(P)H-quinone oxidoreductase subunit H (394 aa).

Belongs to the complex I 49 kDa subunit family. As to quaternary structure, NDH-1 can be composed of about 15 different subunits; different subcomplexes with different compositions have been identified which probably have different functions.

The protein localises to the cellular thylakoid membrane. The catalysed reaction is a plastoquinone + NADH + (n+1) H(+)(in) = a plastoquinol + NAD(+) + n H(+)(out). The enzyme catalyses a plastoquinone + NADPH + (n+1) H(+)(in) = a plastoquinol + NADP(+) + n H(+)(out). NDH-1 shuttles electrons from an unknown electron donor, via FMN and iron-sulfur (Fe-S) centers, to quinones in the respiratory and/or the photosynthetic chain. The immediate electron acceptor for the enzyme in this species is believed to be plastoquinone. Couples the redox reaction to proton translocation, and thus conserves the redox energy in a proton gradient. Cyanobacterial NDH-1 also plays a role in inorganic carbon-concentration. The chain is NAD(P)H-quinone oxidoreductase subunit H from Prochlorococcus marinus (strain NATL2A).